The following is a 446-amino-acid chain: Phosphoglucosamine mutase (446 aa).

S103 functions as the Phosphoserine intermediate in the catalytic mechanism. Positions 103, 242, 244, and 246 each coordinate Mg(2+). Residue S103 is modified to Phosphoserine.

This sequence belongs to the phosphohexose mutase family. The cofactor is Mg(2+). In terms of processing, activated by phosphorylation.

The catalysed reaction is alpha-D-glucosamine 1-phosphate = D-glucosamine 6-phosphate. Functionally, catalyzes the conversion of glucosamine-6-phosphate to glucosamine-1-phosphate. The protein is Phosphoglucosamine mutase of Vibrio vulnificus (strain CMCP6).